A 358-amino-acid polypeptide reads, in one-letter code: Photosystem II protein D1 2 (358 aa).

The next 3 helical transmembrane spans lie at 28–45, 117–132, and 141–155; these read YVGW…AATT, HFLI…QWEL, and WICV…AAFA. A chlorophyll a-binding site is contributed by histidine 117. Tyrosine 125 lines the pheophytin a pocket. [CaMn4O5] cluster-binding residues include aspartate 169 and glutamate 188. Residues 196-217 traverse the membrane as a helical segment; that stretch reads FHMLGVAGVFGGSLFSAMHGSL. Residue histidine 197 participates in chlorophyll a binding. A quinone is bound by residues histidine 214 and 263-264; that span reads SF. Histidine 214 lines the Fe cation pocket. Histidine 271 is a binding site for Fe cation. Residues 273 to 287 traverse the membrane as a helical segment; sequence FLAAWPVVGIWFTSM. Residues histidine 331, glutamate 332, aspartate 341, and alanine 343 each contribute to the [CaMn4O5] cluster site. A propeptide spanning residues 344–358 is cleaved from the precursor; that stretch reads ATESTPVALQAPTIG.

The protein belongs to the reaction center PufL/M/PsbA/D family. PSII is composed of 1 copy each of membrane proteins PsbA, PsbB, PsbC, PsbD, PsbE, PsbF, PsbH, PsbI, PsbJ, PsbK, PsbL, PsbM, PsbT, PsbX, PsbY, PsbZ, Psb30/Ycf12, peripheral proteins PsbO, CyanoQ (PsbQ), PsbU, PsbV and a large number of cofactors. It forms dimeric complexes. The cofactor is The D1/D2 heterodimer binds P680, chlorophylls that are the primary electron donor of PSII, and subsequent electron acceptors. It shares a non-heme iron and each subunit binds pheophytin, quinone, additional chlorophylls, carotenoids and lipids. D1 provides most of the ligands for the Mn4-Ca-O5 cluster of the oxygen-evolving complex (OEC). There is also a Cl(-1) ion associated with D1 and D2, which is required for oxygen evolution. The PSII complex binds additional chlorophylls, carotenoids and specific lipids.. In terms of processing, tyr-160 forms a radical intermediate that is referred to as redox-active TyrZ, YZ or Y-Z. C-terminally processed by CtpA; processing is essential to allow assembly of the oxygen-evolving complex and thus photosynthetic growth.

The protein resides in the cellular thylakoid membrane. It carries out the reaction 2 a plastoquinone + 4 hnu + 2 H2O = 2 a plastoquinol + O2. In terms of biological role, photosystem II (PSII) is a light-driven water:plastoquinone oxidoreductase that uses light energy to abstract electrons from H(2)O, generating O(2) and a proton gradient subsequently used for ATP formation. It consists of a core antenna complex that captures photons, and an electron transfer chain that converts photonic excitation into a charge separation. The D1/D2 (PsbA/PsbD) reaction center heterodimer binds P680, the primary electron donor of PSII as well as several subsequent electron acceptors. The sequence is that of Photosystem II protein D1 2 from Synechococcus sp. (strain WH7803).